Consider the following 152-residue polypeptide: Transcriptional regulator MraZ (152 aa).

2 SpoVT-AbrB domains span residues 5–52 and 81–124; these read ATLV…PLPE and ASEC…DETT.

This sequence belongs to the MraZ family. Forms oligomers.

The protein localises to the cytoplasm. It localises to the nucleoid. Functionally, negatively regulates its own expression and that of the subsequent genes in the proximal part of the division and cell wall (dcw) gene cluster. Acts by binding directly to DNA. May also regulate the expression of genes outside the dcw cluster. This is Transcriptional regulator MraZ from Escherichia fergusonii (strain ATCC 35469 / DSM 13698 / CCUG 18766 / IAM 14443 / JCM 21226 / LMG 7866 / NBRC 102419 / NCTC 12128 / CDC 0568-73).